We begin with the raw amino-acid sequence, 118 residues long: Large ribosomal subunit protein uL18 (118 aa).

It belongs to the universal ribosomal protein uL18 family. In terms of assembly, part of the 50S ribosomal subunit; part of the 5S rRNA/L5/L18/L25 subcomplex. Contacts the 5S and 23S rRNAs.

This is one of the proteins that bind and probably mediate the attachment of the 5S RNA into the large ribosomal subunit, where it forms part of the central protuberance. The chain is Large ribosomal subunit protein uL18 from Lactobacillus acidophilus (strain ATCC 700396 / NCK56 / N2 / NCFM).